Here is a 191-residue protein sequence, read N- to C-terminus: MRDDETTVIGALVHRAVEGDAQATHDLLAHVHPLALRYCRSRLNRLPGDARHFVEDLAQEVCVAVLMALPRYKDTGRPFEAFVFAIAGHKVADLQRAAMRHPGSTAVPSDEMPERPDDSLGPEERALLSSDAAWAKKLLANLPENQRELLVLRVAVGLTAEETGQMLGMSPGAVRVAQHRALSRLRALAEQ.

The sigma-70 factor domain-2 stretch occupies residues Leu-27 to Ala-98. Residues Arg-100 to Pro-122 form a disordered region. The span at Met-112–Pro-122 shows a compositional bias: basic and acidic residues. Residues Leu-138–Ala-187 are sigma-70 factor domain-4. The H-T-H motif DNA-binding region spans Ala-160–His-179.

The protein belongs to the sigma-70 factor family. ECF subfamily.

Its function is as follows. Sigma factors are initiation factors that promote the attachment of RNA polymerase to specific initiation sites and are then released. Extracytoplasmic function (ECF) sigma factors are held in an inactive form by an anti-sigma factor until released. This alternative sigma factor governs the transcription of the principal sigma factor HrdB (SigA) throughout growth. Acts by binding to the promoter region. This Streptomyces griseus subsp. griseus (strain JCM 4626 / CBS 651.72 / NBRC 13350 / KCC S-0626 / ISP 5235) protein is ECF RNA polymerase sigma factor ShbA.